Consider the following 208-residue polypeptide: Large ribosomal subunit protein uL4 (208 aa).

The tract at residues 44-79 is disordered; it reads QRQGTHKSKERSEISGSTRKIGRQKGGGGARRGDMN.

Belongs to the universal ribosomal protein uL4 family. As to quaternary structure, part of the 50S ribosomal subunit.

Functionally, one of the primary rRNA binding proteins, this protein initially binds near the 5'-end of the 23S rRNA. It is important during the early stages of 50S assembly. It makes multiple contacts with different domains of the 23S rRNA in the assembled 50S subunit and ribosome. In terms of biological role, forms part of the polypeptide exit tunnel. The chain is Large ribosomal subunit protein uL4 from Bacteroides thetaiotaomicron (strain ATCC 29148 / DSM 2079 / JCM 5827 / CCUG 10774 / NCTC 10582 / VPI-5482 / E50).